Here is a 290-residue protein sequence, read N- to C-terminus: 4-hydroxy-tetrahydrodipicolinate synthase (290 aa).

A pyruvate-binding site is contributed by T44. Catalysis depends on Y132, which acts as the Proton donor/acceptor. The active-site Schiff-base intermediate with substrate is the K160. I202 is a binding site for pyruvate.

Belongs to the DapA family. Homotetramer; dimer of dimers.

It is found in the cytoplasm. The catalysed reaction is L-aspartate 4-semialdehyde + pyruvate = (2S,4S)-4-hydroxy-2,3,4,5-tetrahydrodipicolinate + H2O + H(+). It functions in the pathway amino-acid biosynthesis; L-lysine biosynthesis via DAP pathway; (S)-tetrahydrodipicolinate from L-aspartate: step 3/4. Functionally, catalyzes the condensation of (S)-aspartate-beta-semialdehyde [(S)-ASA] and pyruvate to 4-hydroxy-tetrahydrodipicolinate (HTPA). The protein is 4-hydroxy-tetrahydrodipicolinate synthase of Geobacter sp. (strain M21).